Consider the following 1465-residue polypeptide: DNA polymerase III PolC-type (1465 aa).

The Exonuclease domain occupies 427–583; sequence YVVFDVETTG…YDAEATGRLL (157 aa).

It belongs to the DNA polymerase type-C family. PolC subfamily.

Its subcellular location is the cytoplasm. The enzyme catalyses DNA(n) + a 2'-deoxyribonucleoside 5'-triphosphate = DNA(n+1) + diphosphate. Its function is as follows. Required for replicative DNA synthesis. This DNA polymerase also exhibits 3' to 5' exonuclease activity. This Streptococcus pyogenes serotype M4 (strain MGAS10750) protein is DNA polymerase III PolC-type.